A 179-amino-acid chain; its full sequence is NADH-quinone oxidoreductase subunit I (179 aa).

2 consecutive 4Fe-4S ferredoxin-type domains span residues 45–74 and 90–119; these read RHPDTGLEKCIGCSLCAAVCPAYAIYVEAA and KVYEINMLRCIFCGLCEEACPTGAVVLGNE. [4Fe-4S] cluster is bound by residues Cys-54, Cys-57, Cys-60, Cys-64, Cys-99, Cys-102, Cys-105, and Cys-109. The tract at residues 146-179 is disordered; the sequence is PQRREAQRTGKPVRLGFKVPKGPRPELEGVEYPR. Positions 168 to 179 are enriched in basic and acidic residues; the sequence is PRPELEGVEYPR.

Belongs to the complex I 23 kDa subunit family. As to quaternary structure, NDH-1 is composed of 15 different subunits. Subunits NuoA, H, J, K, L, M, N constitute the membrane sector of the complex. It depends on [4Fe-4S] cluster as a cofactor.

The protein resides in the cell membrane. The enzyme catalyses a quinone + NADH + 5 H(+)(in) = a quinol + NAD(+) + 4 H(+)(out). Functionally, NDH-1 shuttles electrons from NADH, via FMN and iron-sulfur (Fe-S) centers, to quinones in the respiratory chain. The immediate electron acceptor for the enzyme in this species is believed to be ubiquinone. Couples the redox reaction to proton translocation (for every two electrons transferred, four hydrogen ions are translocated across the cytoplasmic membrane), and thus conserves the redox energy in a proton gradient. This chain is NADH-quinone oxidoreductase subunit I, found in Deinococcus geothermalis (strain DSM 11300 / CIP 105573 / AG-3a).